Here is a 209-residue protein sequence, read N- to C-terminus: Claudin-like protein ZF-A9 (209 aa).

4 helical membrane-spanning segments follow: residues 8 to 28 (LGTTLGTLGWLGIIISCAIPL), 81 to 101 (AILVISAIVGLIAMFASFAGG), 114 to 134 (ALVATTGGVAFIIAGILGLVP), and 159 to 179 (FGAAIFICWGAAVLLVIGGGL). Residues 187–209 (GRTSSRGRYTPASQNGRERSEYV) are disordered. The segment covering 188–201 (RTSSRGRYTPASQN) has biased composition (polar residues).

The protein belongs to the claudin family.

Its subcellular location is the cell membrane. The protein resides in the cell junction. It is found in the tight junction. Its function is as follows. Component of tight junction (TJ) strands. In Danio rerio (Zebrafish), this protein is Claudin-like protein ZF-A9 (cldng).